A 195-amino-acid chain; its full sequence is MRVAEVVRNTSETQIRVKLDLDGTGRQKLATGVPFLDHMLDQIARHGLIDLEVEAHGDTHIDDHHTVEDVGITLGQAVAKAVGDKKGIRRYGHSYVPLDEALSRVVIDFSGRPGLEFHVPFTRARIGTFDVDLSIEFFRGFVNHAGVTLHIDNLRGINAHHQLETVFKAFGRALRAAVELDERAAGQIPSTKGSL.

This sequence belongs to the imidazoleglycerol-phosphate dehydratase family.

It is found in the cytoplasm. It carries out the reaction D-erythro-1-(imidazol-4-yl)glycerol 3-phosphate = 3-(imidazol-4-yl)-2-oxopropyl phosphate + H2O. It functions in the pathway amino-acid biosynthesis; L-histidine biosynthesis; L-histidine from 5-phospho-alpha-D-ribose 1-diphosphate: step 6/9. This chain is Imidazoleglycerol-phosphate dehydratase, found in Burkholderia vietnamiensis (strain G4 / LMG 22486) (Burkholderia cepacia (strain R1808)).